Consider the following 287-residue polypeptide: uncharacterized protein (287 aa).

GTP contacts are provided by residues 43-50 (GKTGAGKS), 90-93 (DLPG), and 156-159 (DKAE). Positions 48–140 (GKSSLCNALF…TDEHFYRQVI (93 aa)) constitute a G domain.

This sequence to E.coli YkfA and YeeP.

This is an uncharacterized protein from Escherichia coli (strain K12).